The primary structure comprises 506 residues: Tabersonine 3-oxygenase (506 aa).

Residues 1–5 are Lumenal-facing; it reads MEFHE. Residues 6-26 form a helical membrane-spanning segment; the sequence is SSPFVFITRGFIFIAISIAVL. At 27–506 the chain is on the cytoplasmic side; that stretch reads RRIISKKTKT…DLQLIATSYA (480 aa). Heme is bound at residue cysteine 450.

It belongs to the cytochrome P450 family. Requires heme as cofactor. As to expression, expressed in leaf epidermis.

It localises to the endoplasmic reticulum membrane. It catalyses the reaction 16-methoxytabersonine + reduced [NADPH--hemoprotein reductase] + O2 = (3R)-1,2-didehydro-3-hydroxy-16-methoxy-2,3-dihydrotabersonine + oxidized [NADPH--hemoprotein reductase] + H2O + H(+). The enzyme catalyses (-)-tabersonine + reduced [NADPH--hemoprotein reductase] + O2 = (3R)-1,2-didehydro-3-hydroxy-2,3-dihydrotabersonine + oxidized [NADPH--hemoprotein reductase] + H2O + H(+). It participates in alkaloid biosynthesis; vindoline biosynthesis. Cytochrome P450 catalyzing the monooxygenation of 16-methoxytabersonine, 16-hydroxytabersonine and tabersonine, but not of 2,3-dihydrotabersonine. Converts the C2,C3 alkene of tabersonine and 16-methoxytabersonine to the epoxides, which then spontaneously open to form the corresponding imine alcohols. Inactive in converting amyrin to ursolic acid. The chain is Tabersonine 3-oxygenase from Catharanthus roseus (Madagascar periwinkle).